Reading from the N-terminus, the 370-residue chain is MGNIFGHLFRVTTFGESHGGGVGVIIDGCPPKLEINVKEIQYELDRRRPGQSKITTPRKESDTCEILSGVFEGQTLGTPIMIWVRNKDARPQDYQDMAIKYRPSHADATYDAKYGIRNWQGGGRSSARETIGRVASGAIAKKILQQYSGVEIVGYVKRIKNLEAIVDPTTVTMEQVESNIVRCPDSECAEKMIELVEKIRDLGDSVGGVVECIVRNVPKGLGSPVFDKLEADLAKGVMSLPATKGFEIGSGFAGTTMTGSEHNDELYTDKLGEIRTVTNRSGGIQGGISNGENIVLRVAFKPTATIRKEQRTVSRQGEETFLAAKGRHDPCVLPRAVPMVEAMVAIVLCDHLLRHYGQCNTLKSENVYGN.

Residue Arg-47 participates in NADP(+) binding. Residues 124 to 126, Gly-286, 301 to 305, and Arg-327 contribute to the FMN site; these read RSS and KPTAT.

The protein belongs to the chorismate synthase family. As to quaternary structure, homotetramer. The cofactor is FMNH2.

The catalysed reaction is 5-O-(1-carboxyvinyl)-3-phosphoshikimate = chorismate + phosphate. It participates in metabolic intermediate biosynthesis; chorismate biosynthesis; chorismate from D-erythrose 4-phosphate and phosphoenolpyruvate: step 7/7. Functionally, catalyzes the anti-1,4-elimination of the C-3 phosphate and the C-6 proR hydrogen from 5-enolpyruvylshikimate-3-phosphate (EPSP) to yield chorismate, which is the branch point compound that serves as the starting substrate for the three terminal pathways of aromatic amino acid biosynthesis. This reaction introduces a second double bond into the aromatic ring system. This chain is Chorismate synthase, found in Trichodesmium erythraeum (strain IMS101).